We begin with the raw amino-acid sequence, 198 residues long: FMN-dependent NADH:quinone oxidoreductase (198 aa).

FMN contacts are provided by residues serine 10, 16-18, 94-97, and 138-141; these read SQS, MYNF, and TRGG.

This sequence belongs to the azoreductase type 1 family. In terms of assembly, homodimer. The cofactor is FMN.

The catalysed reaction is 2 a quinone + NADH + H(+) = 2 a 1,4-benzosemiquinone + NAD(+). It carries out the reaction N,N-dimethyl-1,4-phenylenediamine + anthranilate + 2 NAD(+) = 2-(4-dimethylaminophenyl)diazenylbenzoate + 2 NADH + 2 H(+). Functionally, quinone reductase that provides resistance to thiol-specific stress caused by electrophilic quinones. In terms of biological role, also exhibits azoreductase activity. Catalyzes the reductive cleavage of the azo bond in aromatic azo compounds to the corresponding amines. This is FMN-dependent NADH:quinone oxidoreductase from Shewanella oneidensis (strain ATCC 700550 / JCM 31522 / CIP 106686 / LMG 19005 / NCIMB 14063 / MR-1).